Here is a 501-residue protein sequence, read N- to C-terminus: Ribose import ATP-binding protein RbsA (501 aa).

2 consecutive ABC transporter domains span residues 6–242 (LQLS…VGRK) and 253–495 (VHGQ…VGKK). 38–45 (GENGAGKS) lines the ATP pocket.

It belongs to the ABC transporter superfamily. Ribose importer (TC 3.A.1.2.1) family. The complex is composed of an ATP-binding protein (RbsA), two transmembrane proteins (RbsC) and a solute-binding protein (RbsB).

The protein localises to the cell inner membrane. The enzyme catalyses D-ribose(out) + ATP + H2O = D-ribose(in) + ADP + phosphate + H(+). Its function is as follows. Part of the ABC transporter complex RbsABC involved in ribose import. Responsible for energy coupling to the transport system. The chain is Ribose import ATP-binding protein RbsA from Vibrio vulnificus (strain YJ016).